We begin with the raw amino-acid sequence, 1334 residues long: MASPPHQQLLHHHSTEVSCDSSGDSNSVTVRINPRQQQALSAKRCKYSISSSCSSGESGGVGRGGGGGLRRQKKLPQLFERASSRWWDPKFDSTNLEEASMERCFPQTQRRFRYALFYIGSACLLWGIYFGVHMREKQMVFMVPALCFLLVCVAFFAFTFTKAYARRYVWTSGYTLLVFALTLAPQFQPWTLGERQRVQPRPAAPVDTCLSQVGSFSMCVEVLLLLYTVMHLPLYLSLFLGLSYSVLFETSAFRDESCTLLGGGAVYWELLSKAFLHVCIHAIGIHLFIMSEVRSRSTFLKVGQSIMHGKDLEVEKALKERMIHSVMPRIIADDLMKQGDDESENSVKRHSTSSPKNRKKKPSIQKTPIIFRPFKMQQIEQVSILFADIVGFTKMSANKSAHALVGLLNDLFGRFDRLCEDTKCEKISTLGDCYYCVAGCPEPRADHAYCCIEMGLGMIKAIEQFCQEKKEMVNMRVGVHTGTVLCGILGMRRFKFDVWSNDVNLANLMEQLGVAGKVHISEATAKYLDDRYEMEDGKVTERVGQSAVADQLKGLKTYLISGQKVKEPHCSCSQALLQLGGWGWSQMQAAPSAENTADSTKALKHVEKPKPCPSCSTTLVPPCDVSIDEGAIQNGCQDEHKNSTKAPGGHSPKTQNGLLSPPQEEKLSNSQTSLYEMLQEKGRWGGVSLDQSALLPLRFKNIREKTDAHFVDVIKEDSLMKDYFFKPPISKLSLNFLDQDLEMAYRTSYQEEVMRNAPVKTFASATFSSLLDVFLSTTVFLILSVTCFLKHGMVASPPPPAAVVVFVIAILLEVLSLVISVRMVFFLEEVMACTKRLLELISGWLPRHFLGAILVSLPALAVFSHFTSDFETNIHYTMFMCCAILIAIVQYCNFCQLSSWMRSLLATVVGAVLLILLYVSLCPDSSVETLHLDLAQNLSSRKSPCNSSMPADVKRPADLIGQEVILAVFLLLLLVWFLNRSFEVSYRLHYHGDVEADLHRTKIQSMRDQPDSCVRNIIPYHVADELKVSQSYSKNHDSGGVIFASIVNFSEFYEENYEGGKECYRVLNELIGDFDELLSKPHYSSIEKIKTIGATYMAASGLNTSQCQDSNHPHGHLQTLFEFAKEMMRVVDDFNNNMLWFNFKLRIGFNHGPLTAGVIGTTKLLYDIWGDTVNIASRMDTIGVECRIQVSEETYRILSKMGYDFDYRGTVNVKGKGQMKTYLYPKCMDNGIVPHHQLSISPDIRVQVDGSIGRSPTDEIANLVPSVQNSDKTAHATDNSETKDALPSSKKLQKEPTKAEERCRFGKAVEKTDCEEAGTEEVNELTKLNVSKSV.

Disordered stretches follow at residues M1–V28 and I49–R71. Residues M1–R113 are Cytoplasmic-facing. Over residues E16–V28 the composition is skewed to polar residues. A compositionally biased stretch (gly residues) spans E57 to L69. A helical membrane pass occupies residues Y114–M134. Topologically, residues R135–K137 are extracellular. The helical transmembrane segment at Q138 to F158 threads the bilayer. The Cytoplasmic portion of the chain corresponds to T159–R167. A helical transmembrane segment spans residues Y168–F187. Residues Q188–D207 are Extracellular-facing. A helical transmembrane segment spans residues T208–Y227. The Cytoplasmic segment spans residues T228 to P233. Residues L234–T250 traverse the membrane as a helical segment. Residues S251 to E269 lie on the Extracellular side of the membrane. The chain crosses the membrane as a helical span at residues L270–M290. Residues S291 to S768 are Cytoplasmic-facing. Residues Q338–S363 are disordered. The span at K348–S363 shows a compositional bias: basic residues. Residues D388, I389, and D432 each contribute to the Mg(2+) site. ATP contacts are provided by residues D388–T393, L430–D432, and R476. The interval G635–S670 is disordered. Residues S769–L789 form a helical membrane-spanning segment. Over K790–P800 the chain is Extracellular. The chain crosses the membrane as a helical span at residues A801–V821. Residues R822–F849 are Cytoplasmic-facing. Residues L850 to F870 form a helical membrane-spanning segment. The Extracellular segment spans residues E871–N873. A helical membrane pass occupies residues I874 to F894. The Cytoplasmic portion of the chain corresponds to C895 to R902. A helical transmembrane segment spans residues S903–P923. Residues D924–A957 lie on the Extracellular side of the membrane. 2 N-linked (GlcNAc...) asparagine glycosylation sites follow: N937 and N946. A helical transmembrane segment spans residues D958–L978. Topologically, residues N979–V1334 are cytoplasmic. ATP contacts are provided by residues K1090, D1167–W1169, N1174–R1178, and K1214. Residues S1266 to C1303 form a disordered region. Basic and acidic residues-rich tracts occupy residues K1272–D1284 and L1292–C1303.

Belongs to the adenylyl cyclase class-4/guanylyl cyclase family. The cofactor is Mg(2+). Mn(2+) serves as cofactor. In terms of tissue distribution, detected in embryonic heart (at protein level).

It is found in the cell membrane. It localises to the membrane. It carries out the reaction ATP = 3',5'-cyclic AMP + diphosphate. Insensitive to calcium/calmodulin, forskolin and somatostatin. Stimulated by beta-adrenergic receptor activation. Activity is down-regulated by calcium/calcineurin. Functionally, adenylyl cyclase that catalyzes the formation of the signaling molecule cAMP in response to activation of G protein-coupled receptors. This Gallus gallus (Chicken) protein is Adenylate cyclase type 9 (ADCY9).